A 442-amino-acid polypeptide reads, in one-letter code: NAD(P)H sulfur oxidoreductase (CoA-dependent) (442 aa).

13–14 (AA) serves as a coordination point for FAD. Arg24 contributes to the CoA binding site. Residues 35 to 36 (EA) and 42 to 44 (HAP) contribute to the FAD site. CoA-binding positions include 41-45 (SHAPC), 62-63 (HY), and Arg72. Catalysis depends on Cys45, which acts as the Redox-active. 3 residues coordinate FAD: Val82, Asp280, and Ala298. Residues Asn302 and Lys358 each contribute to the CoA site. Tyr422 contributes to the FAD binding site. Trp430 and Arg438 together coordinate CoA.

The protein belongs to the class-III pyridine nucleotide-disulfide oxidoreductase family. In terms of assembly, homodimer. It depends on FAD as a cofactor.

The protein resides in the cytoplasm. It carries out the reaction hydrogen sulfide + NADP(+) = sulfur + NADPH. The catalysed reaction is hydrogen sulfide + NAD(+) = sulfur + NADH. It catalyses the reaction NADP(+) + 2 CoA = CoA-disulfide + NADPH + H(+). The enzyme catalyses NAD(+) + 2 CoA = CoA-disulfide + NADH + H(+). Functionally, catalyzes the CoA-dependent reduction of elemental sulfur (S(0)) to produce hydrogen sulfide. Can use both NADPH and NADH, but shows a preference for NADPH. May enable S(0) to be used, via sulfide, for iron-sulfur cluster synthesis by SipA. Also shows coenzyme A disulfide reductase (CoADR) activity with both NADH and NADPH. However, CoADR specific activity is about 20-fold lower than the sulfur reduction assay and CoADR activity appears to be an artifactual side reaction and is not thought to have any physiological relevance. Also shows NAD(P)H oxidase activity with both NADH and NADPH. The polypeptide is NAD(P)H sulfur oxidoreductase (CoA-dependent) (Pyrococcus furiosus (strain ATCC 43587 / DSM 3638 / JCM 8422 / Vc1)).